We begin with the raw amino-acid sequence, 700 residues long: Polyribonucleotide nucleotidyltransferase (700 aa).

Residues Asp484 and Asp490 each coordinate Mg(2+). Positions 551–610 (PRVIRMVVDPEKIREIIGPGGKTISKIIAETGVKIDIEEDGRLYITASDLRSGERAKQMI) constitute a KH domain. The S1 motif domain maps to 620 to 688 (GEIYLGKVLR…KLGRISLSRK (69 aa)).

Belongs to the polyribonucleotide nucleotidyltransferase family. It depends on Mg(2+) as a cofactor.

The protein localises to the cytoplasm. The catalysed reaction is RNA(n+1) + phosphate = RNA(n) + a ribonucleoside 5'-diphosphate. Functionally, involved in mRNA degradation. Catalyzes the phosphorolysis of single-stranded polyribonucleotides processively in the 3'- to 5'-direction. This is Polyribonucleotide nucleotidyltransferase from Thermoanaerobacter pseudethanolicus (strain ATCC 33223 / 39E) (Clostridium thermohydrosulfuricum).